The following is a 170-amino-acid chain: uncharacterized protein (170 aa).

The interval 35-57 (EEVMPATAPSTDPAVPKDAQEAD) is disordered.

This is an uncharacterized protein from Candida tsukubaensis (Yeast).